The following is a 282-amino-acid chain: Protoheme IX farnesyltransferase (282 aa).

9 consecutive transmembrane segments (helical) span residues 9–29 (LAKP…FLLA), 39–59 (LPLF…GCVF), 79–99 (LVTG…LLIL), 102–122 (LVLY…GFIV), 139–159 (VLGG…VVNI), 165–185 (LALF…IAML), 210–230 (IMLF…VLGS), 231–251 (ADLF…YKSI), and 261–281 (VFAK…CLTM).

It belongs to the UbiA prenyltransferase family. Protoheme IX farnesyltransferase subfamily.

Its subcellular location is the cell inner membrane. It carries out the reaction heme b + (2E,6E)-farnesyl diphosphate + H2O = Fe(II)-heme o + diphosphate. It participates in porphyrin-containing compound metabolism; heme O biosynthesis; heme O from protoheme: step 1/1. In terms of biological role, converts heme B (protoheme IX) to heme O by substitution of the vinyl group on carbon 2 of heme B porphyrin ring with a hydroxyethyl farnesyl side group. In Francisella tularensis subsp. holarctica (strain FTNF002-00 / FTA), this protein is Protoheme IX farnesyltransferase.